We begin with the raw amino-acid sequence, 297 residues long: N-acetylmuramic acid 6-phosphate etherase (297 aa).

Positions 55–218 (AAKRYSKGGR…STGVMIKQGK (164 aa)) constitute an SIS domain. The Proton donor role is filled by Glu83. Residue Glu114 is part of the active site.

It belongs to the GCKR-like family. MurNAc-6-P etherase subfamily. As to quaternary structure, homodimer.

The enzyme catalyses N-acetyl-D-muramate 6-phosphate + H2O = N-acetyl-D-glucosamine 6-phosphate + (R)-lactate. Its pathway is amino-sugar metabolism; N-acetylmuramate degradation. Functionally, specifically catalyzes the cleavage of the D-lactyl ether substituent of MurNAc 6-phosphate, producing GlcNAc 6-phosphate and D-lactate. The protein is N-acetylmuramic acid 6-phosphate etherase of Lactobacillus gasseri (strain ATCC 33323 / DSM 20243 / BCRC 14619 / CIP 102991 / JCM 1131 / KCTC 3163 / NCIMB 11718 / NCTC 13722 / AM63).